Reading from the N-terminus, the 337-residue chain is Acetyl-coenzyme A synthetase (337 aa).

Residues Arg-131–Arg-134, Thr-249, and Asn-273 each bind CoA. Position 325–327 (Gly-325–Pro-327) interacts with ATP.

The protein belongs to the ATP-dependent AMP-binding enzyme family. Mg(2+) serves as cofactor. Acetylated. Deacetylation by the SIR2-homolog deacetylase activates the enzyme.

The catalysed reaction is acetate + ATP + CoA = acetyl-CoA + AMP + diphosphate. In terms of biological role, catalyzes the conversion of acetate into acetyl-CoA (AcCoA), an essential intermediate at the junction of anabolic and catabolic pathways. AcsA undergoes a two-step reaction. In the first half reaction, AcsA combines acetate with ATP to form acetyl-adenylate (AcAMP) intermediate. In the second half reaction, it can then transfer the acetyl group from AcAMP to the sulfhydryl group of CoA, forming the product AcCoA. This is Acetyl-coenzyme A synthetase (acsA) from Nostoc linckia.